Reading from the N-terminus, the 330-residue chain is Neurogenic differentiation factor 4 (330 aa).

A disordered region spans residues 1–79 (MTKTYTKAKE…RGPKKKKMTK (79 aa)). Basic and acidic residues predominate over residues 25–35 (LSSKDELKAEN). Residues 52-64 (DSIEEEEEEEDDG) show a composition bias toward acidic residues. Over residues 67–79 (PKRRGPKKKKMTK) the composition is skewed to basic residues. The Nuclear localization signal motif lies at 73–79 (KKKKMTK). The bHLH domain occupies 87–139 (ARRVKANARERTRMHGLNDALDNLRRVMPCYSKTQKLSKIETLRLARNYIWAL). The leucine-zipper stretch occupies residues 162 to 183 (LSQPTSNLVAGCLQLGPQTLFL).

As to quaternary structure, efficient DNA binding requires dimerization with another bHLH protein. In terms of processing, serine or threonine phosphorylation within the basic region may regulate neurogenic activity. Expressed in both the developing central nervous system and peripheral nervous system.

Its subcellular location is the nucleus. Its function is as follows. Probably acts as a transcriptional activator. Mediates neuronal differentiation. Required for the regulation of amacrine cell fate specification in the retina. The polypeptide is Neurogenic differentiation factor 4 (NEUROD4) (Gallus gallus (Chicken)).